A 77-amino-acid polypeptide reads, in one-letter code: Neurexophilin-4 (77 aa).

Residues 1 to 77 (NCHVEYEKTN…NFQSEHPYFG (77 aa)) are v (Cys-rich).

This sequence belongs to the neurexophilin family. May be proteolytically processed at the boundary between the N-terminal non-conserved and the central conserved domain in neuron-like cells.

The protein resides in the secreted. Functionally, may be signaling molecules that resemble neuropeptides and that act by binding to alpha-neurexins and possibly other receptors. This Macaca mulatta (Rhesus macaque) protein is Neurexophilin-4 (NXPH4).